A 1337-amino-acid chain; its full sequence is Sister chromatid cohesion protein PDS5 homolog A (1337 aa).

Residue M1 is modified to N-acetylmethionine. An HEAT repeat occupies 393–429 (ALVNDQLLGFVRERTLDKRWRVRKEAMMGLAQLYKKY). A Phosphoserine modification is found at S1097. Position 1146 is an N6-acetyllysine (K1146). Residues 1150–1337 (ATGRKPYVRS…PAERQIDLQR (188 aa)) are disordered. The segment covering 1159–1180 (STGTETGSNINVNSELNPSTGN) has biased composition (polar residues). S1195 bears the Phosphoserine mark. Phosphothreonine is present on T1208. At K1211 the chain carries N6-acetyllysine. The segment covering 1223 to 1233 (SDQATQGNISS) has biased composition (polar residues). Residue K1290 is modified to N6-acetyllysine. A Phosphoserine modification is found at S1305. Residues 1321–1337 (DLAKKAAPAERQIDLQR) are compositionally biased toward basic and acidic residues.

This sequence belongs to the PDS5 family. Interacts with the cohesin complex. Interacts with WAPL (via FGF motifs) or CDCA5 (via the FGF motif); the interaction is direct, cohesin-dependent and competitive. Interacts with SMC3. Interacts with TP63. In terms of tissue distribution, highest level in colon. Low levels in lung, ovary, breast and kidney. Reduced level in renal tumor tissue. Isoform 2 is expressed in kidney.

Its subcellular location is the nucleus. Its function is as follows. Probable regulator of sister chromatid cohesion in mitosis which may stabilize cohesin complex association with chromatin. May couple sister chromatid cohesion during mitosis to DNA replication. Cohesion ensures that chromosome partitioning is accurate in both meiotic and mitotic cells and plays an important role in DNA repair. This chain is Sister chromatid cohesion protein PDS5 homolog A, found in Homo sapiens (Human).